Consider the following 312-residue polypeptide: Ribosomal RNA small subunit methyltransferase H (312 aa).

S-adenosyl-L-methionine is bound by residues 35–37 (GGH), Asp55, Phe80, Asp102, and Gln109.

The protein belongs to the methyltransferase superfamily. RsmH family.

The protein resides in the cytoplasm. It carries out the reaction cytidine(1402) in 16S rRNA + S-adenosyl-L-methionine = N(4)-methylcytidine(1402) in 16S rRNA + S-adenosyl-L-homocysteine + H(+). Its function is as follows. Specifically methylates the N4 position of cytidine in position 1402 (C1402) of 16S rRNA. The chain is Ribosomal RNA small subunit methyltransferase H from Pseudoalteromonas translucida (strain TAC 125).